The sequence spans 333 residues: Autoinducer 2 import system permease protein LsrD (333 aa).

10 helical membrane passes run 7–27 (YGWEFALAVLLVMEILLFGIA), 45–65 (ICIGIVALPLTMVIVSGGIDI), 70–90 (TIGLCAISLGVMNQADIPMAA), 91–111 (AIPLTLNVGAMCGIINAALIL), 119–139 (VITLGTLYLFGGSALLLSGIF), 162–182 (LLGLPVPLAMFIICVLVFWLF), 212–232 (TLYFIYSLTGIAAAIAAIVLV), 240–260 (SDLGSSFLMPAITAVVLGGAN), 261–281 (IYGGSGSIIGTALAMLLIGYL), and 288–308 (IGIPNQISSALSGALLIIAVV).

It belongs to the binding-protein-dependent transport system permease family. AraH/RbsC subfamily. The complex is composed of two ATP-binding proteins (LsrA), two transmembrane proteins (LsrC and LsrD) and a solute-binding protein (LsrB).

Its subcellular location is the cell inner membrane. In terms of biological role, part of the ABC transporter complex LsrABCD involved in autoinducer 2 (AI-2) import. Probably responsible for the translocation of the substrate across the membrane. The sequence is that of Autoinducer 2 import system permease protein LsrD (lsrD) from Photorhabdus temperata.